Here is a 172-residue protein sequence, read N- to C-terminus: Capsid protein (172 aa).

The disordered stretch occupies residues Met-1–Ser-26. Positions Lys-11–Tyr-20 are enriched in basic residues.

Belongs to the nanoviridae capsid protein family.

It is found in the virion. The polypeptide is Capsid protein (DNA-S) (Faba bean necrotic yellows virus (isolate Syrian SV292-88) (FBNYV)).